Reading from the N-terminus, the 50-residue chain is F420-non-reducing hydrogenase vhu subunit U (50 aa).

2 residues coordinate Ni(2+): Sec-27 and Cys-30. Residue Sec-27 is a non-standard amino acid, selenocysteine. Positions Ile-34–Glu-50 are cleaved as a propeptide — removed in mature form.

The protein belongs to the [NiFe]/[NiFeSe] hydrogenase large subunit family. As to quaternary structure, the F420-non-reducing hydrogenase vhu is composed of four subunits; VhuA, VhuD, VhuG and VhuU. The cofactor is Ni(2+).

The polypeptide is F420-non-reducing hydrogenase vhu subunit U (vhuU) (Methanocaldococcus jannaschii (strain ATCC 43067 / DSM 2661 / JAL-1 / JCM 10045 / NBRC 100440) (Methanococcus jannaschii)).